Reading from the N-terminus, the 191-residue chain is MSHAEDNAGTRRDFLYHATAATGVVVTGAAVWPLINQMNASADVKAMASIFVDVSAVEVGTQLTVKWRGKPVFIRRRDEKDIELARSVPLGALRDTSAENANKPGAEATDENRTLPAFDGTNTGEWLVMLGVCTHLGCVPMGDKSGDFGGWFCPCHGSHYDSAGRIRKGPAPRNLDIPVAAFVDETTIKLG.

Residues 18–35 (ATAATGVVVTGAAVWPLI) form a helical membrane-spanning segment. Residues 94 to 189 (RDTSAENANK…AAFVDETTIK (96 aa)) form the Rieske domain. A disordered region spans residues 95 to 116 (DTSAENANKPGAEATDENRTLP). Residues cysteine 133, histidine 135, cysteine 153, and histidine 156 each contribute to the [2Fe-2S] cluster site. Cysteine 138 and cysteine 155 form a disulfide bridge.

It belongs to the Rieske iron-sulfur protein family. In terms of assembly, the main subunits of complex b-c1 are: cytochrome b, cytochrome c1 and the Rieske protein. [2Fe-2S] cluster is required as a cofactor.

The protein resides in the cell membrane. It catalyses the reaction a quinol + 2 Fe(III)-[cytochrome c](out) = a quinone + 2 Fe(II)-[cytochrome c](out) + 2 H(+)(out). Functionally, component of the ubiquinol-cytochrome c reductase complex (complex III or cytochrome b-c1 complex), which is a respiratory chain that generates an electrochemical potential coupled to ATP synthesis. The protein is Ubiquinol-cytochrome c reductase iron-sulfur subunit (petA) of Rhodobacter capsulatus (strain ATCC BAA-309 / NBRC 16581 / SB1003).